The chain runs to 285 residues: ATP synthase gamma chain (285 aa).

It belongs to the ATPase gamma chain family. As to quaternary structure, F-type ATPases have 2 components, CF(1) - the catalytic core - and CF(0) - the membrane proton channel. CF(1) has five subunits: alpha(3), beta(3), gamma(1), delta(1), epsilon(1). CF(0) has three main subunits: a, b and c.

The protein resides in the cell membrane. Produces ATP from ADP in the presence of a proton gradient across the membrane. The gamma chain is believed to be important in regulating ATPase activity and the flow of protons through the CF(0) complex. In Lysinibacillus sphaericus (strain C3-41), this protein is ATP synthase gamma chain.